The primary structure comprises 321 residues: Aspartate carbamoyltransferase catalytic subunit (321 aa).

The carbamoyl phosphate site is built by arginine 64 and threonine 65. Lysine 92 provides a ligand contact to L-aspartate. Positions 114, 144, and 147 each coordinate carbamoyl phosphate. L-aspartate is bound by residues arginine 177 and arginine 232. Residues glycine 273 and proline 274 each coordinate carbamoyl phosphate.

The protein belongs to the aspartate/ornithine carbamoyltransferase superfamily. ATCase family. As to quaternary structure, heterododecamer (2C3:3R2) of six catalytic PyrB chains organized as two trimers (C3), and six regulatory PyrI chains organized as three dimers (R2).

The catalysed reaction is carbamoyl phosphate + L-aspartate = N-carbamoyl-L-aspartate + phosphate + H(+). The protein operates within pyrimidine metabolism; UMP biosynthesis via de novo pathway; (S)-dihydroorotate from bicarbonate: step 2/3. Its function is as follows. Catalyzes the condensation of carbamoyl phosphate and aspartate to form carbamoyl aspartate and inorganic phosphate, the committed step in the de novo pyrimidine nucleotide biosynthesis pathway. This Alkalilimnicola ehrlichii (strain ATCC BAA-1101 / DSM 17681 / MLHE-1) protein is Aspartate carbamoyltransferase catalytic subunit.